A 403-amino-acid chain; its full sequence is Na(+)/H(+) antiporter NhaH (403 aa).

The next 12 helical transmembrane spans lie at 7-27 (VFIQ…IAKL), 34-54 (VALV…IEEA), 99-119 (LAFL…YFLL), 125-145 (VAFT…LSIF), 168-188 (IAVV…EMGW), 196-216 (FMFL…GYVF), 228-245 (LEVA…FIAE), 250-272 (SGVI…IGMS), 282-302 (FWDS…GLEI), 311-331 (WGYI…AVYI), 345-365 (ILIN…LSLP), and 373-393 (QVLL…GLTL).

The protein belongs to the monovalent cation:proton antiporter 1 (CPA1) transporter (TC 2.A.36) family.

It localises to the cell membrane. Functionally, na(+)/H(+) antiporter that extrudes sodium in exchange for external protons. Can also transport lithium. The polypeptide is Na(+)/H(+) antiporter NhaH (nhaH) (Halobacillus aidingensis).